Consider the following 282-residue polypeptide: Shikimate dehydrogenase (NADP(+)) (282 aa).

Residues 16-18 and threonine 63 contribute to the shikimate site; that span reads SLS. Residue lysine 67 is the Proton acceptor of the active site. 2 residues coordinate shikimate: asparagine 88 and aspartate 103. NADP(+)-binding positions include 128–132 and glycine 243; that span reads GAGGA.

This sequence belongs to the shikimate dehydrogenase family. In terms of assembly, homodimer.

It carries out the reaction shikimate + NADP(+) = 3-dehydroshikimate + NADPH + H(+). The protein operates within metabolic intermediate biosynthesis; chorismate biosynthesis; chorismate from D-erythrose 4-phosphate and phosphoenolpyruvate: step 4/7. In terms of biological role, involved in the biosynthesis of the chorismate, which leads to the biosynthesis of aromatic amino acids. Catalyzes the reversible NADPH linked reduction of 3-dehydroshikimate (DHSA) to yield shikimate (SA). This Xylella fastidiosa (strain 9a5c) protein is Shikimate dehydrogenase (NADP(+)).